Reading from the N-terminus, the 201-residue chain is Holliday junction branch migration complex subunit RuvA (201 aa).

Residues 1 to 64 (MYEYIRGQFQ…EDFIGLYGFT (64 aa)) form a domain I region. The domain II stretch occupies residues 65 to 143 (TREELEMFKL…PDELTSEEGE (79 aa)). Positions 144 to 152 (LIEGINDNS) are flexible linker. The interval 153–201 (DYSFNINETLSALMALGYTEKEAQKALEKVDKTLSIENMIKESLKLLMR) is domain III.

The protein belongs to the RuvA family. Homotetramer. Forms an RuvA(8)-RuvB(12)-Holliday junction (HJ) complex. HJ DNA is sandwiched between 2 RuvA tetramers; dsDNA enters through RuvA and exits via RuvB. An RuvB hexamer assembles on each DNA strand where it exits the tetramer. Each RuvB hexamer is contacted by two RuvA subunits (via domain III) on 2 adjacent RuvB subunits; this complex drives branch migration. In the full resolvosome a probable DNA-RuvA(4)-RuvB(12)-RuvC(2) complex forms which resolves the HJ.

The protein resides in the cytoplasm. Functionally, the RuvA-RuvB-RuvC complex processes Holliday junction (HJ) DNA during genetic recombination and DNA repair, while the RuvA-RuvB complex plays an important role in the rescue of blocked DNA replication forks via replication fork reversal (RFR). RuvA specifically binds to HJ cruciform DNA, conferring on it an open structure. The RuvB hexamer acts as an ATP-dependent pump, pulling dsDNA into and through the RuvAB complex. HJ branch migration allows RuvC to scan DNA until it finds its consensus sequence, where it cleaves and resolves the cruciform DNA. In Clostridium perfringens (strain ATCC 13124 / DSM 756 / JCM 1290 / NCIMB 6125 / NCTC 8237 / Type A), this protein is Holliday junction branch migration complex subunit RuvA.